A 1128-amino-acid polypeptide reads, in one-letter code: Cordon-bleu protein-like 1 (1128 aa).

The disordered stretch occupies residues 1-35 (MDGRTPRPQDAPARRKPKAKAPLPPAETKYTDVSS). At threonine 139 the chain carries Phosphothreonine. Phosphoserine occurs at positions 204, 222, and 256. Disordered regions lie at residues 249 to 309 (KKRD…VPQD), 325 to 441 (MSVD…SPKS), and 454 to 499 (TLKN…TSNG). Position 260 is a phosphothreonine (threonine 260). The span at 270-286 (FTRSNTISKPYISNTLP) shows a compositional bias: polar residues. Residue serine 273 is modified to Phosphoserine. Threonine 284 is modified (phosphothreonine). A KKRRAP 1 motif is present at residues 291-296 (KKRRAP). 4 positions are modified to phosphoserine: serine 326, serine 333, serine 344, and serine 356. Over residues 345–357 (LQLSSMSAGNSSL) the composition is skewed to polar residues. The short motif at 360–365 (TKRKAP) is the KKRRAP 2 element. Over residues 397–415 (SEANSPEELSSPAGISSDY) the composition is skewed to polar residues. The segment covering 416–425 (SLEEIDEKEE) has biased composition (acidic residues). Phosphoserine is present on residues serine 438, serine 441, serine 461, serine 471, and serine 474. Over residues 475–488 (MEEKQETKSTDGQE) the composition is skewed to basic and acidic residues. Serine 563, serine 584, serine 786, serine 813, serine 814, and serine 821 each carry phosphoserine. Disordered stretches follow at residues 780 to 840 (TEDS…PFAP), 882 to 964 (SAAA…SQVS), 995 to 1081 (RSQS…PEQM), and 1103 to 1128 (IPSN…QDGH). Basic and acidic residues predominate over residues 899–908 (LTNKEAERDM). Phosphoserine occurs at positions 911, 917, 947, 1069, and 1070. Polar residues-rich tracts occupy residues 1045 to 1081 (SAHN…PEQM) and 1103 to 1122 (IPSN…SMSP). Residues 1081-1101 (MRQSLLTAIRSGEAAAKLKRV) enclose the WH2 domain. Serine 1121 bears the Phosphoserine mark.

The polypeptide is Cordon-bleu protein-like 1 (Homo sapiens (Human)).